We begin with the raw amino-acid sequence, 166 residues long: Crossover junction endodeoxyribonuclease RuvC (166 aa).

Residues aspartate 7, glutamate 67, and aspartate 140 contribute to the active site. Aspartate 7, glutamate 67, and aspartate 140 together coordinate Mg(2+).

Belongs to the RuvC family. Homodimer which binds Holliday junction (HJ) DNA. The HJ becomes 2-fold symmetrical on binding to RuvC with unstacked arms; it has a different conformation from HJ DNA in complex with RuvA. In the full resolvosome a probable DNA-RuvA(4)-RuvB(12)-RuvC(2) complex forms which resolves the HJ. Mg(2+) serves as cofactor.

It localises to the cytoplasm. The catalysed reaction is Endonucleolytic cleavage at a junction such as a reciprocal single-stranded crossover between two homologous DNA duplexes (Holliday junction).. The RuvA-RuvB-RuvC complex processes Holliday junction (HJ) DNA during genetic recombination and DNA repair. Endonuclease that resolves HJ intermediates. Cleaves cruciform DNA by making single-stranded nicks across the HJ at symmetrical positions within the homologous arms, yielding a 5'-phosphate and a 3'-hydroxyl group; requires a central core of homology in the junction. The consensus cleavage sequence is 5'-(A/T)TT(C/G)-3'. Cleavage occurs on the 3'-side of the TT dinucleotide at the point of strand exchange. HJ branch migration catalyzed by RuvA-RuvB allows RuvC to scan DNA until it finds its consensus sequence, where it cleaves and resolves the cruciform DNA. The sequence is that of Crossover junction endodeoxyribonuclease RuvC from Ruminiclostridium cellulolyticum (strain ATCC 35319 / DSM 5812 / JCM 6584 / H10) (Clostridium cellulolyticum).